Reading from the N-terminus, the 401-residue chain is Secreted LysM effector Blys8 (401 aa).

The signal sequence occupies residues 1 to 19 (MRTLAIFFIGAAVAAHVSP). One can recognise a LysM 1 domain in the interval 42–89 (TYYDEAYDKSYTCDDLLSAWVISKQDFESWNPAVGSDCKLVLGHSYCV). The span at 98-136 (STTTTTTTSTTTKTTTKTTTTTTAAPKPTSSAPSGPSPT) shows a compositional bias: low complexity. Positions 98 to 137 (STTTTTTTSTTTKTTTKTTTTTTAAPKPTSSAPSGPSPTQ) are disordered. The LysM 2 domain maps to 146–193 (AYYFVKAGDTCDKISQMYGTFSTAQFIEWNPAVGSSCTGLWAGYYYCV). The tract at residues 201–223 (SRTSTAGPTSTKPANGVTTPQPT) is disordered. The LysM 3 domain occupies 233 to 279 (QFVYVQPGDQCGTVASRAGVSLSDFLQWNPSTGKDCSGLWANAYACV).

It belongs to the secreted LysM effector family.

Functionally, might have a role in sequestration of chitin oligosaccharides (breakdown products of fungal cell walls that are released during invasion and act as triggers of host immunity) to dampen host defense. This is Secreted LysM effector Blys8 from Beauveria bassiana (strain ARSEF 2860) (White muscardine disease fungus).